The primary structure comprises 350 residues: tRNA-splicing endonuclease (350 aa).

Residues tyrosine 286, histidine 297, and lysine 328 contribute to the active site.

This sequence belongs to the tRNA-intron endonuclease family. Archaeal long subfamily. As to quaternary structure, homodimer.

The catalysed reaction is pretRNA = a 3'-half-tRNA molecule with a 5'-OH end + a 5'-half-tRNA molecule with a 2',3'-cyclic phosphate end + an intron with a 2',3'-cyclic phosphate and a 5'-hydroxyl terminus.. Functionally, endonuclease that removes tRNA introns. Cleaves pre-tRNA at the 5'- and 3'-splice sites to release the intron. The products are an intron and two tRNA half-molecules bearing 2',3' cyclic phosphate and 5'-OH termini. Recognizes a pseudosymmetric substrate in which 2 bulged loops of 3 bases are separated by a stem of 4 bp. The protein is tRNA-splicing endonuclease of Methanosarcina barkeri (strain Fusaro / DSM 804).